Reading from the N-terminus, the 209-residue chain is Uracil phosphoribosyltransferase (209 aa).

5-phospho-alpha-D-ribose 1-diphosphate-binding positions include arginine 79, arginine 104, and 131–139 (DPMLATGGS). Uracil is bound by residues isoleucine 194 and 199–201 (GDA). Aspartate 200 lines the 5-phospho-alpha-D-ribose 1-diphosphate pocket.

This sequence belongs to the UPRTase family. It depends on Mg(2+) as a cofactor.

The catalysed reaction is UMP + diphosphate = 5-phospho-alpha-D-ribose 1-diphosphate + uracil. Its pathway is pyrimidine metabolism; UMP biosynthesis via salvage pathway; UMP from uracil: step 1/1. With respect to regulation, allosterically activated by GTP. Catalyzes the conversion of uracil and 5-phospho-alpha-D-ribose 1-diphosphate (PRPP) to UMP and diphosphate. This Clostridium tetani (strain Massachusetts / E88) protein is Uracil phosphoribosyltransferase.